The sequence spans 42 residues: Lebocin-like anionic peptide 1 (42 aa).

As to expression, hemolymph.

The protein resides in the secreted. In terms of biological role, antimicrobial protein. Has antibacterial activity against the Gram-positive bacteria M.luteus (MIC=22.7 uM) and L.monocytogenes (MIC=90.9 uM). Lacks antibacterial activity against the Gram-positive bacteria B.circulans, S.aureus, and S.lutea, and the Gram-negative bacteria E.coli D31, E.coli ATCC 25922, and S.typhimurium. Has antifungal activity against A.niger (MIC=90.9 uM) and T.harzianum (MIC=90.9 uM), but lacks antifungal activity against S.cerevisiae, P.pastoris, Z.marxianus, C.albicans, C.fructus, and F.oxysporum. The chain is Lebocin-like anionic peptide 1 from Galleria mellonella (Greater wax moth).